Here is a 333-residue protein sequence, read N- to C-terminus: 4-hydroxy-3-methylbut-2-enyl diphosphate reductase (333 aa).

Cysteine 34 contributes to the [4Fe-4S] cluster binding site. Positions 63 and 96 each coordinate (2E)-4-hydroxy-3-methylbut-2-enyl diphosphate. Dimethylallyl diphosphate is bound by residues histidine 63 and histidine 96. Isopentenyl diphosphate is bound by residues histidine 63 and histidine 96. Residue cysteine 118 participates in [4Fe-4S] cluster binding. Histidine 146 serves as a coordination point for (2E)-4-hydroxy-3-methylbut-2-enyl diphosphate. Histidine 146 contributes to the dimethylallyl diphosphate binding site. Histidine 146 lines the isopentenyl diphosphate pocket. Glutamate 148 (proton donor) is an active-site residue. Threonine 186 is a (2E)-4-hydroxy-3-methylbut-2-enyl diphosphate binding site. Cysteine 216 provides a ligand contact to [4Fe-4S] cluster. 4 residues coordinate (2E)-4-hydroxy-3-methylbut-2-enyl diphosphate: serine 244, serine 245, asparagine 246, and serine 289. Serine 244, serine 245, asparagine 246, and serine 289 together coordinate dimethylallyl diphosphate. Isopentenyl diphosphate-binding residues include serine 244, serine 245, asparagine 246, and serine 289.

This sequence belongs to the IspH family. It depends on [4Fe-4S] cluster as a cofactor.

It carries out the reaction isopentenyl diphosphate + 2 oxidized [2Fe-2S]-[ferredoxin] + H2O = (2E)-4-hydroxy-3-methylbut-2-enyl diphosphate + 2 reduced [2Fe-2S]-[ferredoxin] + 2 H(+). The catalysed reaction is dimethylallyl diphosphate + 2 oxidized [2Fe-2S]-[ferredoxin] + H2O = (2E)-4-hydroxy-3-methylbut-2-enyl diphosphate + 2 reduced [2Fe-2S]-[ferredoxin] + 2 H(+). It functions in the pathway isoprenoid biosynthesis; dimethylallyl diphosphate biosynthesis; dimethylallyl diphosphate from (2E)-4-hydroxy-3-methylbutenyl diphosphate: step 1/1. Its pathway is isoprenoid biosynthesis; isopentenyl diphosphate biosynthesis via DXP pathway; isopentenyl diphosphate from 1-deoxy-D-xylulose 5-phosphate: step 6/6. Its function is as follows. Catalyzes the conversion of 1-hydroxy-2-methyl-2-(E)-butenyl 4-diphosphate (HMBPP) into a mixture of isopentenyl diphosphate (IPP) and dimethylallyl diphosphate (DMAPP). Acts in the terminal step of the DOXP/MEP pathway for isoprenoid precursor biosynthesis. This chain is 4-hydroxy-3-methylbut-2-enyl diphosphate reductase, found in Mycobacterium sp. (strain KMS).